Here is a 105-residue protein sequence, read N- to C-terminus: Ketoisovalerate oxidoreductase subunit VorD (105 aa).

2 consecutive 4Fe-4S ferredoxin-type domains span residues 44–73 and 74–103; these read FMPV…IKED and GFVA…MVRE. Positions 53, 56, 59, 63, 83, 86, 89, and 93 each coordinate [4Fe-4S] cluster.

In terms of assembly, heterotetramer of one alpha, one beta, one delta and one gamma chain. Requires [4Fe-4S] cluster as cofactor.

It carries out the reaction 3-methyl-2-oxobutanoate + 2 oxidized [2Fe-2S]-[ferredoxin] + CoA = 2-methylpropanoyl-CoA + 2 reduced [2Fe-2S]-[ferredoxin] + CO2 + H(+). This chain is Ketoisovalerate oxidoreductase subunit VorD (vorD), found in Pyrococcus abyssi (strain GE5 / Orsay).